The primary structure comprises 155 residues: Transcription antitermination protein NusB (155 aa).

Belongs to the NusB family.

Its function is as follows. Involved in transcription antitermination. Required for transcription of ribosomal RNA (rRNA) genes. Binds specifically to the boxA antiterminator sequence of the ribosomal RNA (rrn) operons. The protein is Transcription antitermination protein NusB of Vibrio vulnificus (strain CMCP6).